The primary structure comprises 444 residues: Tol-Pal system protein TolB (444 aa).

The signal sequence occupies residues M1–A18.

This sequence belongs to the TolB family. In terms of assembly, the Tol-Pal system is composed of five core proteins: the inner membrane proteins TolA, TolQ and TolR, the periplasmic protein TolB and the outer membrane protein Pal. They form a network linking the inner and outer membranes and the peptidoglycan layer.

It localises to the periplasm. Its function is as follows. Part of the Tol-Pal system, which plays a role in outer membrane invagination during cell division and is important for maintaining outer membrane integrity. In Rickettsia canadensis (strain McKiel), this protein is Tol-Pal system protein TolB.